The sequence spans 330 residues: Ketol-acid reductoisomerase (NADP(+)) (330 aa).

The region spanning 2–182 is the KARI N-terminal Rossmann domain; sequence ARMYYDEDAN…GGTRAGVLET (181 aa). Residues 25–28, Ser51, Ser53, and 83–86 contribute to the NADP(+) site; these read YGSQ and DEVQ. His108 is a catalytic residue. An NADP(+)-binding site is contributed by Gly134. Residues 183 to 328 enclose the KARI C-terminal knotted domain; the sequence is TFREETETDL…QDLRAMMSWL (146 aa). Positions 191, 195, 227, and 231 each coordinate Mg(2+). Ser252 contacts substrate.

This sequence belongs to the ketol-acid reductoisomerase family. Mg(2+) serves as cofactor.

It catalyses the reaction (2R)-2,3-dihydroxy-3-methylbutanoate + NADP(+) = (2S)-2-acetolactate + NADPH + H(+). It carries out the reaction (2R,3R)-2,3-dihydroxy-3-methylpentanoate + NADP(+) = (S)-2-ethyl-2-hydroxy-3-oxobutanoate + NADPH + H(+). The protein operates within amino-acid biosynthesis; L-isoleucine biosynthesis; L-isoleucine from 2-oxobutanoate: step 2/4. It functions in the pathway amino-acid biosynthesis; L-valine biosynthesis; L-valine from pyruvate: step 2/4. In terms of biological role, involved in the biosynthesis of branched-chain amino acids (BCAA). Catalyzes an alkyl-migration followed by a ketol-acid reduction of (S)-2-acetolactate (S2AL) to yield (R)-2,3-dihydroxy-isovalerate. In the isomerase reaction, S2AL is rearranged via a Mg-dependent methyl migration to produce 3-hydroxy-3-methyl-2-ketobutyrate (HMKB). In the reductase reaction, this 2-ketoacid undergoes a metal-dependent reduction by NADPH to yield (R)-2,3-dihydroxy-isovalerate. This Microcystis aeruginosa (strain NIES-843 / IAM M-2473) protein is Ketol-acid reductoisomerase (NADP(+)).